The following is a 95-amino-acid chain: Mitochondrial import inner membrane translocase subunit Tim13 (95 aa).

Met-1 carries the post-translational modification N-acetylmethionine. Ser-7 carries the post-translational modification Phosphoserine. Residues 46–69 carry the Twin CX3C motif motif; it reads CFRKCIGKPGGSLDNSEQKCIAMC. Disulfide bonds link Cys-46-Cys-69 and Cys-50-Cys-65. Lys-53 bears the N6-succinyllysine mark.

It belongs to the small Tim family. As to quaternary structure, heterohexamer; composed of 3 copies of TIMM8 (TIMM8A or TIMM8B) and 3 copies of TIMM13, named soluble 70 kDa complex. Associates with the TIM22 complex, whose core is composed of TIMM22. As to expression, ubiquitous, with highest expression in heart, kidney, liver and skeletal muscle.

The protein resides in the mitochondrion inner membrane. Mitochondrial intermembrane chaperone that participates in the import and insertion of some multi-pass transmembrane proteins into the mitochondrial inner membrane. Also required for the transfer of beta-barrel precursors from the TOM complex to the sorting and assembly machinery (SAM complex) of the outer membrane. Acts as a chaperone-like protein that protects the hydrophobic precursors from aggregation and guide them through the mitochondrial intermembrane space. The TIMM8-TIMM13 complex mediates the import of proteins such as TIMM23, SLC25A12/ARALAR1 and SLC25A13/ARALAR2, while the predominant TIMM9-TIMM10 70 kDa complex mediates the import of much more proteins. The polypeptide is Mitochondrial import inner membrane translocase subunit Tim13 (TIMM13) (Homo sapiens (Human)).